The chain runs to 63 residues: Large ribosomal subunit protein eL37 (63 aa).

The Zn(2+) site is built by C20, C23, C35, and C38. The segment at 20 to 38 (CRRCGRRAFNVKKGYCAAC) adopts a C4-type zinc-finger fold.

This sequence belongs to the eukaryotic ribosomal protein eL37 family. Part of the 50S ribosomal subunit. It depends on Zn(2+) as a cofactor.

Functionally, binds to the 23S rRNA. This Thermococcus kodakarensis (strain ATCC BAA-918 / JCM 12380 / KOD1) (Pyrococcus kodakaraensis (strain KOD1)) protein is Large ribosomal subunit protein eL37.